Here is a 160-residue protein sequence, read N- to C-terminus: Ureidoglycolate lyase (160 aa).

This sequence belongs to the ureidoglycolate lyase family. Homodimer. Requires Ni(2+) as cofactor.

The enzyme catalyses (S)-ureidoglycolate = urea + glyoxylate. The protein operates within nitrogen metabolism; (S)-allantoin degradation. Functionally, catalyzes the catabolism of the allantoin degradation intermediate (S)-ureidoglycolate, generating urea and glyoxylate. Involved in the anaerobic utilization of allantoin as sole nitrogen source. Reinforces the induction of genes involved in the degradation of allantoin and glyoxylate by producing glyoxylate. The chain is Ureidoglycolate lyase from Escherichia coli O6:H1 (strain CFT073 / ATCC 700928 / UPEC).